A 286-amino-acid chain; its full sequence is 4-diphosphocytidyl-2-C-methyl-D-erythritol kinase (286 aa).

K8 is an active-site residue. 92-102 is a binding site for ATP; that stretch reads PVSAGLAGGST. The active site involves D134.

It belongs to the GHMP kinase family. IspE subfamily.

It catalyses the reaction 4-CDP-2-C-methyl-D-erythritol + ATP = 4-CDP-2-C-methyl-D-erythritol 2-phosphate + ADP + H(+). It functions in the pathway isoprenoid biosynthesis; isopentenyl diphosphate biosynthesis via DXP pathway; isopentenyl diphosphate from 1-deoxy-D-xylulose 5-phosphate: step 3/6. Its function is as follows. Catalyzes the phosphorylation of the position 2 hydroxy group of 4-diphosphocytidyl-2C-methyl-D-erythritol. The protein is 4-diphosphocytidyl-2-C-methyl-D-erythritol kinase of Caldicellulosiruptor bescii (strain ATCC BAA-1888 / DSM 6725 / KCTC 15123 / Z-1320) (Anaerocellum thermophilum).